We begin with the raw amino-acid sequence, 205 residues long: Small ribosomal subunit protein uS4 (205 aa).

Basic and acidic residues predominate over residues 1–16 (MSKRETTKYKIDRRMG). The interval 1 to 46 (MSKRETTKYKIDRRMGENIWGRPKSPVNRRDYGPGQHGQRRKGKLS) is disordered. The region spanning 94–157 (SRLDAVIYRA…KQLVLVLESV (64 aa)) is the S4 RNA-binding domain.

Belongs to the universal ribosomal protein uS4 family. Part of the 30S ribosomal subunit. Contacts protein S5. The interaction surface between S4 and S5 is involved in control of translational fidelity.

In terms of biological role, one of the primary rRNA binding proteins, it binds directly to 16S rRNA where it nucleates assembly of the body of the 30S subunit. Functionally, with S5 and S12 plays an important role in translational accuracy. The protein is Small ribosomal subunit protein uS4 of Bartonella quintana (strain Toulouse) (Rochalimaea quintana).